A 345-amino-acid polypeptide reads, in one-letter code: Tyrosine-binding protein (345 aa).

An N-terminal signal peptide occupies residues 1–23 (MIKSKKILSLIIAGVLGVSMLTG). A lipid anchor (N-palmitoyl cysteine) is attached at cysteine 24. The S-diacylglycerol cysteine moiety is linked to residue cysteine 24.

As to quaternary structure, the complex is probably composed of two ATP-binding proteins (CDR20291_0806), two transmembrane proteins (CDR20291_0807) and a solute-binding protein (CDR20291_0805).

Its subcellular location is the cell membrane. In terms of biological role, probably part of an ABC transporter complex involved in tyrosine uptake. May also import phenylalanine. This Clostridioides difficile (strain R20291) (Peptoclostridium difficile) protein is Tyrosine-binding protein.